A 280-amino-acid polypeptide reads, in one-letter code: Myb family transcription factor PHL11 (280 aa).

Residues 20 to 80 (RDPKPRLRWT…HLQKYRLGQQ (61 aa)) enclose the HTH myb-type domain. The segment at residues 51-76 (PKSVLKLMGLKGLTLYHLKSHLQKYR) is a DNA-binding region (H-T-H motif). Positions 77 to 98 (LGQQQGKKQNRTEQNKENAGSS) are disordered. The segment at 129-149 (AEAMRHQVDAQQRFQEQLEVQ) is coiled coil. The short motif at 142 to 147 (FQEQLE) is the LHEQLE element.

The protein belongs to the MYB-CC family.

It localises to the nucleus. The polypeptide is Myb family transcription factor PHL11 (Arabidopsis thaliana (Mouse-ear cress)).